A 380-amino-acid chain; its full sequence is Carbamoyl phosphate synthase small chain (380 aa).

A CPSase region spans residues methionine 1 to glutamate 184. The L-glutamine site is built by serine 55, glycine 236, and glycine 238. The Glutamine amidotransferase type-1 domain maps to threonine 188–alanine 380. Cysteine 264 acts as the Nucleophile in catalysis. Residues phenylalanine 265, glutamine 268, asparagine 306, glycine 308, and phenylalanine 309 each coordinate L-glutamine. Residues histidine 354 and glutamate 356 contribute to the active site.

It belongs to the CarA family. As to quaternary structure, composed of two chains; the small (or glutamine) chain promotes the hydrolysis of glutamine to ammonia, which is used by the large (or ammonia) chain to synthesize carbamoyl phosphate. Tetramer of heterodimers (alpha,beta)4.

It catalyses the reaction hydrogencarbonate + L-glutamine + 2 ATP + H2O = carbamoyl phosphate + L-glutamate + 2 ADP + phosphate + 2 H(+). It carries out the reaction L-glutamine + H2O = L-glutamate + NH4(+). The protein operates within amino-acid biosynthesis; L-arginine biosynthesis; carbamoyl phosphate from bicarbonate: step 1/1. It participates in pyrimidine metabolism; UMP biosynthesis via de novo pathway; (S)-dihydroorotate from bicarbonate: step 1/3. Functionally, small subunit of the glutamine-dependent carbamoyl phosphate synthetase (CPSase). CPSase catalyzes the formation of carbamoyl phosphate from the ammonia moiety of glutamine, carbonate, and phosphate donated by ATP, constituting the first step of 2 biosynthetic pathways, one leading to arginine and/or urea and the other to pyrimidine nucleotides. The small subunit (glutamine amidotransferase) binds and cleaves glutamine to supply the large subunit with the substrate ammonia. In Streptomyces coelicolor (strain ATCC BAA-471 / A3(2) / M145), this protein is Carbamoyl phosphate synthase small chain.